Consider the following 340-residue polypeptide: Glyceraldehyde-3-phosphate dehydrogenase (340 aa).

NAD(+) contacts are provided by residues 13-14 (TI) and Gly-112. 141–143 (SCN) is a D-glyceraldehyde 3-phosphate binding site. The Nucleophile role is filled by Cys-142. Arg-170 serves as a coordination point for NAD(+). 196 to 197 (HG) lines the D-glyceraldehyde 3-phosphate pocket. Gln-302 contributes to the NAD(+) binding site.

It belongs to the glyceraldehyde-3-phosphate dehydrogenase family. In terms of assembly, homotetramer.

It localises to the cytoplasm. It carries out the reaction D-glyceraldehyde 3-phosphate + phosphate + NADP(+) = (2R)-3-phospho-glyceroyl phosphate + NADPH + H(+). It catalyses the reaction D-glyceraldehyde 3-phosphate + phosphate + NAD(+) = (2R)-3-phospho-glyceroyl phosphate + NADH + H(+). It participates in carbohydrate degradation; glycolysis; pyruvate from D-glyceraldehyde 3-phosphate: step 1/5. This chain is Glyceraldehyde-3-phosphate dehydrogenase (gap), found in Archaeoglobus fulgidus (strain ATCC 49558 / DSM 4304 / JCM 9628 / NBRC 100126 / VC-16).